Here is a 107-residue protein sequence, read N- to C-terminus: UPF0145 protein PM1668 (107 aa).

This sequence belongs to the UPF0145 family.

The protein is UPF0145 protein PM1668 of Pasteurella multocida (strain Pm70).